A 1382-amino-acid polypeptide reads, in one-letter code: Hepatocyte growth factor receptor (1382 aa).

A signal peptide spans 1-24; the sequence is MKASAVLAPGILALLFTLVQGNDG. The Extracellular segment spans residues 25 to 933; the sequence is ECQEALAKSE…VIVQPDQNFT (909 aa). A Sema domain is found at 27–516; sequence QEALAKSEMN…TGKKITKIPL (490 aa). Residues N45, N100, and N106 are each glycosylated (N-linked (GlcNAc...) asparagine). Intrachain disulfides connect C95–C101, C98–C160, C133–C141, and C173–C176. N-linked (GlcNAc...) asparagine glycans are attached at residues N203 and N359. 2 disulfide bridges follow: C299/C364 and C386/C398. N-linked (GlcNAc...) asparagine glycans are attached at residues N400 and N406. 4 disulfide bridges follow: C521/C539, C527/C562, C530/C546, and C542/C552. 3 IPT/TIG domains span residues 564–656, 658–740, and 743–837; these read PAIH…FSYV, PVIT…FSYR, and PIVH…LIYV. T583 is a glycosylation site (O-linked (Man) threonine). N-linked (GlcNAc...) asparagine glycans are attached at residues N608 and N636. T677 and T762 each carry an O-linked (Man) threonine glycan. Residues N786, N880, and N931 are each glycosylated (N-linked (GlcNAc...) asparagine). The helical transmembrane segment at 934-956 threads the bilayer; sequence GLIVGVVSISIILLLLLGLFLWM. Over 957–1382 the chain is Cytoplasmic; sequence KKRKQIKDLG…QDNVNGEVDT (426 aa). The residue at position 967 (S967) is a Phosphoserine. Position 978 is a phosphothreonine (T978). Residues S991, S998, and S1001 each carry the phosphoserine modification. The residue at position 1004 (Y1004) is a Phosphotyrosine. Residues 1079-1346 enclose the Protein kinase domain; that stretch reads VHFNEVIGRG…RISAIFSTFI (268 aa). ATP-binding positions include 1085 to 1093 and K1111; that span reads IGRGHFGCV. D1205 functions as the Proton acceptor in the catalytic mechanism. Residues 1213–1382 form an interaction with RANBP9 region; it reads LDEKFTVKVA…QDNVNGEVDT (170 aa). Y1231 is subject to Phosphotyrosine. Phosphotyrosine; by autocatalysis occurs at positions 1235 and 1236. T1290 bears the Phosphothreonine mark. The segment at 1321-1360 is interaction with MUC20; that stretch reads WHPKAEMRPSFSELVSRISAIFSTFIGEHYVHVNATYVNV. Phosphotyrosine; by autocatalysis is present on residues Y1350 and Y1357. A Phosphotyrosine modification is found at Y1366.

Belongs to the protein kinase superfamily. Tyr protein kinase family. In terms of assembly, heterodimer made of an alpha chain (50 kDa) and a beta chain (145 kDa) which are disulfide linked. Binds PLXNB1. Interacts when phosphorylated with downstream effectors including STAT3, PIK3R1, SRC, PCLG1, GRB2 and GAB1. Interacts with SPSB1, SPSB2 and SPSB4. Interacts with INPP5D/SHIP1. When phosphorylated at Tyr-1357, interacts with INPPL1/SHIP2. Interacts with RANBP9 and RANBP10, as well as SPSB1, SPSB2, SPSB3 and SPSB4. SPSB1 binding occurs in the presence and in the absence of HGF, however HGF treatment has a positive effect on this interaction. Interacts with MUC20; prevents interaction with GRB2 and suppresses hepatocyte growth factor-induced cell proliferation. Interacts with GRB10. Interacts with PTPN1 and PTPN2. Interacts with HSP90AA1 and HSP90AB1; the interaction suppresses MET kinase activity. Interacts with tensin TNS3. Interacts (when phosphorylated) with tensin TNS4 (via SH2 domain); the interaction increases MET protein stability by inhibiting MET endocytosis and subsequent lysosomal degradation. Post-translationally, autophosphorylated in response to ligand binding on Tyr-1235 and Tyr-1236 in the kinase domain leading to further phosphorylation of Tyr-1350 and Tyr-1357 in the C-terminal multifunctional docking site. Dephosphorylated by PTPRJ at Tyr-1350 and Tyr-1366. Dephosphorylated by PTPN1 and PTPN2. In terms of processing, ubiquitinated. Ubiquitination by CBL regulates the receptor stability and activity through proteasomal degradation. O-mannosylation of IPT/TIG domains by TMEM260 is required for protein maturation. O-mannosylated residues are composed of single mannose glycans that are not elongated or modified.

It localises to the membrane. The enzyme catalyses L-tyrosyl-[protein] + ATP = O-phospho-L-tyrosyl-[protein] + ADP + H(+). Its activity is regulated as follows. In its inactive state, the C-terminal tail interacts with the catalytic domain and inhibits the kinase activity. Upon ligand binding, the C-terminal tail is displaced and becomes phosphorylated, thus increasing the kinase activity. In terms of biological role, receptor tyrosine kinase that transduces signals from the extracellular matrix into the cytoplasm by binding to hepatocyte growth factor/HGF ligand. Regulates many physiological processes including proliferation, scattering, morphogenesis and survival. Ligand binding at the cell surface induces autophosphorylation of MET on its intracellular domain that provides docking sites for downstream signaling molecules. Following activation by ligand, interacts with the PI3-kinase subunit PIK3R1, PLCG1, SRC, GRB2, STAT3 or the adapter GAB1. Recruitment of these downstream effectors by MET leads to the activation of several signaling cascades including the RAS-ERK, PI3 kinase-AKT, or PLCgamma-PKC. The RAS-ERK activation is associated with the morphogenetic effects while PI3K/AKT coordinates prosurvival effects. During embryonic development, MET signaling plays a role in gastrulation, development and migration of muscles and neuronal precursors, angiogenesis and kidney formation. In adults, participates in wound healing as well as organ regeneration and tissue remodeling. Also promotes differentiation and proliferation of hematopoietic cells. This is Hepatocyte growth factor receptor (MET) from Eulemur macaco macaco (Black lemur).